We begin with the raw amino-acid sequence, 469 residues long: Probable periplasmic serine endoprotease DegP-like (469 aa).

The first 25 residues, M1 to A25, serve as a signal peptide directing secretion. Catalysis depends on charge relay system residues H114, D144, and S217. Residues G215–S217 and L272–I276 contribute to the substrate site. PDZ domains follow at residues L261–G352 and S358–G458.

The protein belongs to the peptidase S1C family.

It localises to the periplasm. It catalyses the reaction Acts on substrates that are at least partially unfolded. The cleavage site P1 residue is normally between a pair of hydrophobic residues, such as Val-|-Val.. Might be efficient in the degradation of transiently denatured and unfolded proteins which accumulate in the periplasm following stress conditions. In Marinomonas sp. (strain MWYL1), this protein is Probable periplasmic serine endoprotease DegP-like.